The primary structure comprises 192 residues: Der GTPase-activating protein YihI (192 aa).

Positions 1–80 are disordered; that stretch reads MSRTKKTRRI…KAAVKEVKDP (80 aa). Basic and acidic residues-rich tracts occupy residues 9–25, 37–48, and 65–80; these read RITD…KPEQ, TRYELDAKAREE, and DPAE…VKDP.

It belongs to the YihI family. In terms of assembly, interacts with Der.

Its function is as follows. A GTPase-activating protein (GAP) that modifies Der/EngA GTPase function. May play a role in ribosome biogenesis. The polypeptide is Der GTPase-activating protein YihI (Actinobacillus pleuropneumoniae serotype 7 (strain AP76)).